Reading from the N-terminus, the 548-residue chain is Chaperonin GroEL (548 aa).

ATP-binding positions include 30-33, Lys51, 87-91, Gly415, 479-481, and Asp495; these read TLGP, DGTTT, and NAA.

It belongs to the chaperonin (HSP60) family. Forms a cylinder of 14 subunits composed of two heptameric rings stacked back-to-back. Interacts with the co-chaperonin GroES.

The protein localises to the cytoplasm. It catalyses the reaction ATP + H2O + a folded polypeptide = ADP + phosphate + an unfolded polypeptide.. Functionally, together with its co-chaperonin GroES, plays an essential role in assisting protein folding. The GroEL-GroES system forms a nano-cage that allows encapsulation of the non-native substrate proteins and provides a physical environment optimized to promote and accelerate protein folding. This is Chaperonin GroEL from Vibrio campbellii (strain ATCC BAA-1116).